A 221-amino-acid polypeptide reads, in one-letter code: MGRFRGGLRCIKYLLLGFNLLFWLAGSAVIAFGLWFRFGGAIKELSSEDKSPEYFYVGLYVLVGAGALMMAVGFFGCCGAMRESQCVLGSFFTCLLVIFAAEVTTGVFAFIGKGVAIRHVQTMYEEAYNDYLKDRGKGNGTLITFHSTFQCCGKESSEQVQPTCPKELLGHKNCIDEIETIISVKLQLIGIVGIGIAGLTIFGMIFSMVLCCAIRNSRDVI.

Residues 1 to 13 (MGRFRGGLRCIKY) are Cytoplasmic-facing. Residues 14 to 34 (LLLGFNLLFWLAGSAVIAFGL) form a helical membrane-spanning segment. At 35–54 (WFRFGGAIKELSSEDKSPEY) the chain is on the extracellular side. A helical membrane pass occupies residues 55–75 (FYVGLYVLVGAGALMMAVGFF). The Cytoplasmic segment spans residues 76–90 (GCCGAMRESQCVLGS). The chain crosses the membrane as a helical span at residues 91–111 (FFTCLLVIFAAEVTTGVFAFI). Topologically, residues 112–188 (GKGVAIRHVQ…ETIISVKLQL (77 aa)) are extracellular. Asn139 carries an N-linked (GlcNAc...) asparagine glycan. Residues 189-209 (IGIVGIGIAGLTIFGMIFSMV) form a helical membrane-spanning segment. Topologically, residues 210–221 (LCCAIRNSRDVI) are cytoplasmic.

The protein belongs to the tetraspanin (TM4SF) family.

The protein localises to the membrane. Functionally, may play a role in signalling in oligodendrocytes in the early stages of their terminal differentiation into myelin-forming glia and may also function in stabilizing the mature sheath. This Homo sapiens (Human) protein is Tetraspanin-2 (TSPAN2).